The following is a 596-amino-acid chain: Choline dehydrogenase, mitochondrial (596 aa).

The transit peptide at 1 to 34 directs the protein to the mitochondrion; sequence MWQVLRGWRKGWQSPRGALAWAVQGQPCPPCSRA. 44–73 contacts FAD; sequence TFVVVGAGSAGCVLASRLTEDPNHRVLLLE. At K438 the chain carries N6-succinyllysine. N6-acetyllysine; alternate is present on residues K486 and K498. N6-succinyllysine; alternate occurs at positions 486 and 498. Residue H513 is the Proton acceptor of the active site. The residue at position 582 (K582) is an N6-acetyllysine.

This sequence belongs to the GMC oxidoreductase family. Requires FAD as cofactor. In terms of processing, acetylation of Lys-498 is observed in liver mitochondria from fasted mice but not from fed mice.

It localises to the mitochondrion inner membrane. It catalyses the reaction choline + A = betaine aldehyde + AH2. It functions in the pathway amine and polyamine biosynthesis; betaine biosynthesis via choline pathway; betaine aldehyde from choline (cytochrome c reductase route): step 1/1. The protein is Choline dehydrogenase, mitochondrial (Chdh) of Mus musculus (Mouse).